Reading from the N-terminus, the 57-residue chain is UPF0391 membrane protein NE0130 (57 aa).

Transmembrane regions (helical) follow at residues 1–21 (MLKWAIIFAIISFISGVFGFR) and 33–53 (FLFFLFALITLVLLVLGLLGI).

This sequence belongs to the UPF0391 family.

Its subcellular location is the cell membrane. The sequence is that of UPF0391 membrane protein NE0130 from Nitrosomonas europaea (strain ATCC 19718 / CIP 103999 / KCTC 2705 / NBRC 14298).